The sequence spans 673 residues: MKMTRLYPLALGGLLLPAIANAQTSQQDESTLVVTASKQSSRSASANNVSSTVVSAPELSDAGVTASDKLPRVLPGLNIENSGNMLFSTISLRGVSSAQDFYNPAVTLYVDGVPQLSTNTIQALTDVQSVELLRGPQGTLYGKSAQGGIINIVTQQPDSTPRGYIEGGVSSRDSYRSKFNLSGPIQDGLLYGSVTLLRQVDDGDMINPATGSDDLGGTRASIGNVKLRLAPDDQPWEMGFAASRECTRATQDAYVGWNDIKGRKLSISDGSPDPYMRRCTDSQTLSGKYTTDDWVFNLISAWQQQHYSRTFPSGSLIVNMPQRWNQDVQELRAATLGDARTVDMVFGLYRQNTREKLNSAYDMPTMPYLSSTGYTTAETLAAYSDLTWHLTDRFDIGGGVRFSHDKSSTQYHGSMLGNPFGDQGKSNDDQVLGQLSAGYMLTDDWRVYTRVAQGYKPSGYNIVPTAGLDAKPFVAEKSINYELGTRYETADVTLQAATFYTHTKDMQLYSGPVRMQTLSNAGKADATGVELEAKWRFAPGWSWDINGNVIRSEFTNDSELYHGNRVPFVPRYGAGSSVNGVIDTRYGALMPRLAVNLVGPHYFDGDNQLRQGTYATLDSSLGWQATERMNISVYVDNLFDRRYRTYGYMNGSSAVAQVNMGRTVGINTRIDFF.

A signal peptide spans 1 to 22 (MKMTRLYPLALGGLLLPAIANA). Positions 30-37 (STLVVTAS) match the TonB box motif. The 115-residue stretch at 41 to 155 (SRSASANNVS…QGGIINIVTQ (115 aa)) folds into the TBDR plug domain. The TBDR beta-barrel domain occupies 160-672 (TPRGYIEGGV…TVGINTRIDF (513 aa)). The TonB C-terminal box signature appears at 657-673 (QVNMGRTVGINTRIDFF).

Belongs to the TonB-dependent receptor family.

It is found in the cell outer membrane. Receptor for the bacteriocin pesticin and for the siderophore yersiniabactin. The chain is Pesticin receptor (fyuA) from Yersinia pestis.